Consider the following 146-residue polypeptide: Hemoglobin subunit beta (146 aa).

Val-1 carries the post-translational modification N-acetylvaline. A Globin domain is found at 2–146 (QLSGEEKAAV…VANALAHKYH (145 aa)). The residue at position 44 (Ser-44) is a Phosphoserine. Lys-59 carries the post-translational modification N6-acetyllysine. His-63 is a heme b binding site. Lys-82 carries the post-translational modification N6-acetyllysine. His-92 is a binding site for heme b. Cys-93 is subject to S-nitrosocysteine. Residue Lys-144 is modified to N6-acetyllysine.

It belongs to the globin family. In terms of assembly, heterotetramer of two alpha chains and two beta chains. As to expression, red blood cells.

Functionally, involved in oxygen transport from the lung to the various peripheral tissues. The protein is Hemoglobin subunit beta (HBB) of Equus caballus (Horse).